The chain runs to 397 residues: Tryptophan synthase beta chain (397 aa).

At K89 the chain carries N6-(pyridoxal phosphate)lysine.

This sequence belongs to the TrpB family. As to quaternary structure, tetramer of two alpha and two beta chains. The cofactor is pyridoxal 5'-phosphate.

It catalyses the reaction (1S,2R)-1-C-(indol-3-yl)glycerol 3-phosphate + L-serine = D-glyceraldehyde 3-phosphate + L-tryptophan + H2O. It functions in the pathway amino-acid biosynthesis; L-tryptophan biosynthesis; L-tryptophan from chorismate: step 5/5. The beta subunit is responsible for the synthesis of L-tryptophan from indole and L-serine. In Leptospira interrogans serogroup Icterohaemorrhagiae serovar copenhageni (strain Fiocruz L1-130), this protein is Tryptophan synthase beta chain.